A 223-amino-acid chain; its full sequence is Phosphoribosylformylglycinamidine synthase subunit PurQ (223 aa).

One can recognise a Glutamine amidotransferase type-1 domain in the interval 4-223 (RIGVITFPGT…FQSVLSTLVS (220 aa)). Cys87 (nucleophile) is an active-site residue. Residues His195 and Glu197 contribute to the active site.

As to quaternary structure, part of the FGAM synthase complex composed of 1 PurL, 1 PurQ and 2 PurS subunits.

The protein resides in the cytoplasm. The enzyme catalyses N(2)-formyl-N(1)-(5-phospho-beta-D-ribosyl)glycinamide + L-glutamine + ATP + H2O = 2-formamido-N(1)-(5-O-phospho-beta-D-ribosyl)acetamidine + L-glutamate + ADP + phosphate + H(+). It catalyses the reaction L-glutamine + H2O = L-glutamate + NH4(+). It functions in the pathway purine metabolism; IMP biosynthesis via de novo pathway; 5-amino-1-(5-phospho-D-ribosyl)imidazole from N(2)-formyl-N(1)-(5-phospho-D-ribosyl)glycinamide: step 1/2. Part of the phosphoribosylformylglycinamidine synthase complex involved in the purines biosynthetic pathway. Catalyzes the ATP-dependent conversion of formylglycinamide ribonucleotide (FGAR) and glutamine to yield formylglycinamidine ribonucleotide (FGAM) and glutamate. The FGAM synthase complex is composed of three subunits. PurQ produces an ammonia molecule by converting glutamine to glutamate. PurL transfers the ammonia molecule to FGAR to form FGAM in an ATP-dependent manner. PurS interacts with PurQ and PurL and is thought to assist in the transfer of the ammonia molecule from PurQ to PurL. This Corynebacterium jeikeium (strain K411) protein is Phosphoribosylformylglycinamidine synthase subunit PurQ.